Consider the following 227-residue polypeptide: Cytidylate kinase (227 aa).

12–20 (GPSGAGKGT) serves as a coordination point for ATP.

It belongs to the cytidylate kinase family. Type 1 subfamily.

The protein resides in the cytoplasm. The enzyme catalyses CMP + ATP = CDP + ADP. It catalyses the reaction dCMP + ATP = dCDP + ADP. The polypeptide is Cytidylate kinase (Xanthomonas axonopodis pv. citri (strain 306)).